A 207-amino-acid chain; its full sequence is tRNA (pseudouridine(54)-N(1))-methyltransferase (207 aa).

Leu137 lines the S-adenosyl-L-methionine pocket.

This sequence belongs to the methyltransferase superfamily. TrmY family. In terms of assembly, homodimer.

It is found in the cytoplasm. It carries out the reaction pseudouridine(54) in tRNA + S-adenosyl-L-methionine = N(1)-methylpseudouridine(54) in tRNA + S-adenosyl-L-homocysteine + H(+). Functionally, specifically catalyzes the N1-methylation of pseudouridine at position 54 (Psi54) in tRNAs. In Halorubrum lacusprofundi (strain ATCC 49239 / DSM 5036 / JCM 8891 / ACAM 34), this protein is tRNA (pseudouridine(54)-N(1))-methyltransferase.